The chain runs to 503 residues: UDP-N-acetylglucosamine--peptide N-acetylglucosaminyltransferase GtfA subunit (503 aa).

The tract at residues 1-78 (MTIYNINLGI…FTDIKIAPTS (78 aa)) is N-terminus R-fold-1. Residue 16-19 (GVEY) coordinates UDP. Residues 79-195 (VTVDDVLAYF…VYHFKDKIFY (117 aa)) are extended beta-sheet domain. Positions 196–306 (GKQAFVRAFM…QPKIVTIPVG (111 aa)) are C-terminus R-fold-1. Residue H242 coordinates N-acetyl-D-glucosamine. The tract at residues 307–503 (SIDSLTDSSQ…KKTVEEVLHD (197 aa)) is R-fold-2. A UDP-binding site is contributed by R328. An N-acetyl-D-glucosamine-binding site is contributed by E332. UDP-binding positions include K333, G358, and 384–385 (HA). Residue 404–407 (EGFG) participates in N-acetyl-D-glucosamine binding. 408–412 (LTLME) provides a ligand contact to UDP.

It belongs to the glycosyltransferase group 1 family. Glycosyltransferase 4 subfamily. In terms of assembly, monomer. Interacts with stabilizing protein GtfB, probably as a heterotetramer with 2 subunits each of GtfA and GtfB, part of the accessory SecA2/SecY2 protein translocation apparatus.

The protein localises to the cytoplasm. Its subcellular location is the cell membrane. The enzyme catalyses L-seryl-[protein] + UDP-N-acetyl-alpha-D-glucosamine = 3-O-[N-acetyl-alpha-D-glucosaminyl]-L-seryl-[protein] + UDP + H(+). It functions in the pathway protein modification; protein glycosylation. In terms of biological role, required for the polymorphic O-glycosylation of serine-rich repeat protein PsrP. Catalyzes the first step in glycosylation by transferring N-acetylglucosamine from UDP-GlcNAc to serine residues in PsrP. Part of the accessory SecA2/SecY2 system specifically required to export serine-rich repeat cell wall proteins encoded upstream in the same operon. The GtfA-GtfB complex adds GlcNAc from UDP-GlcNAc to PsrP (experimentally characterized with truncated PsrP-SSR1 constructs); this subunit alone has weak N-acetylglucosaminyl transferase activity that is 10-fold stimulated by GtfB. The complex requires at least a 25 residue-long peptide for activity; the in vitro assay has only been seen to glycosylate Ser residues. The alpha linkage was shown in L.reuteri. The chain is UDP-N-acetylglucosamine--peptide N-acetylglucosaminyltransferase GtfA subunit from Streptococcus pneumoniae serotype 4 (strain ATCC BAA-334 / TIGR4).